The primary structure comprises 247 residues: ATP synthase subunit a, chloroplastic (247 aa).

5 helical membrane passes run 38-58 (QVLI…IIAV), 95-115 (VPFI…GALL), 134-154 (INTT…AGLS), 199-219 (LVVV…VMFL), and 220-240 (GLFT…AYIG).

It belongs to the ATPase A chain family. As to quaternary structure, F-type ATPases have 2 components, CF(1) - the catalytic core - and CF(0) - the membrane proton channel. CF(1) has five subunits: alpha(3), beta(3), gamma(1), delta(1), epsilon(1). CF(0) has four main subunits: a, b, b' and c.

It localises to the plastid. The protein localises to the chloroplast thylakoid membrane. Its function is as follows. Key component of the proton channel; it plays a direct role in the translocation of protons across the membrane. The chain is ATP synthase subunit a, chloroplastic from Oryza sativa subsp. indica (Rice).